A 524-amino-acid chain; its full sequence is D-3-phosphoglycerate dehydrogenase (524 aa).

NAD(+)-binding positions include 149–150, aspartate 169, 229–231, and aspartate 255; these read RI and CAR. Arginine 231 is an active-site residue. Glutamate 260 is an active-site residue. Catalysis depends on histidine 278, which acts as the Proton donor. 278–281 contributes to the NAD(+) binding site; that stretch reads HQGA. In terms of domain architecture, ACT spans 452–524; that stretch reads LAIIKHIDRP…NIKDVAVINL (73 aa).

The protein belongs to the D-isomer specific 2-hydroxyacid dehydrogenase family.

The catalysed reaction is (2R)-3-phosphoglycerate + NAD(+) = 3-phosphooxypyruvate + NADH + H(+). It participates in amino-acid biosynthesis; L-serine biosynthesis; L-serine from 3-phospho-D-glycerate: step 1/3. The sequence is that of D-3-phosphoglycerate dehydrogenase (serA) from Methanocaldococcus jannaschii (strain ATCC 43067 / DSM 2661 / JAL-1 / JCM 10045 / NBRC 100440) (Methanococcus jannaschii).